The following is a 1352-amino-acid chain: MQPVPSDPNYGLLRSLFQDPNNQCCAECNSANVPYVCIKLGVFICPTCAHFLSTLGFKVRPIMGSSFSEEDISRLQSIGNLVSKQFWLARWTPMDIVMPPPEDPNLESFLRLKYIEKRWTSSLSTSDGFSSPNNNNTSNVNNINNNSNHNNNINNNNNNINNNNNNNINNNNNIINNFSNINNISNGMNNISLNNINNNNNNNNHYNGNDIGIPIVHKTQSQPQPQPQPQPQPQSQGFSPFNSPRSSPKPGRHHLIDDLISFNPTPVNNSNNNNNNNNNNNNGNNGNPLKFSGGIPQNNNNNNNNNTTTTTTTTNNNNKVPFDPFSPIKTFSESGEYQNTNGNQQLSGSGNSLIDILSHPTQSKSPSPSGTPHSLSPQHHSSDFKVHLIDIPTTQQQLQQQQLQLQQQLQQQLQQQQQQQQQQQQQQQSPISNPFTSNNNSNSEPLVSILDKHEDLHNHHHHQQQQHHKQQQQQQQQQQNGNNSPLAQFNQIQQQQINNNNPFVEEKQPHQHPHHLQHHRHHSTSSINHGSNGDLASISLTLLTPSPSPSPSFNYSGGVSSAPNNSLNNSCNGNNNLNNGMLNFSNLNIGGSTSSACSTNSSSNITIANNINSSNNINIINNQNNQNNNNNNNTNNVMISPSPSPNPFLPTPTSTNQNNHIITPIPVNPFTDNLQLNSNNIRQHPQQMYIQQQQQQQQQQQQQQQQQQQQQQQQQQQQLQMQQQQQQQMQQHYQQQQQQQQQQQQQQQQQQQQQQQQQQQQQQQQQQQQQQQQQQQQHINLSSSAPLQSVNHSPIPLQPQHSSSQYMNQQGYQVYPNVGNQPQSPQQIQPQPLQQQIFQQVQQQQPQIPQQSPQPLQSSTDEDQSVLEVLNLKKLFDMNMMDKEEFEHRRRQIIDNLTKTTSPIHQQPPQPPQPVLPVSAPAQVPQPHPPQQQNGPTVPQQQQQQQQQQQQQQQQQQQQQQQQQPIPQPSSSSPTPDARLTGTERVIRHRFDAKLGKWVQTATIVITEPTPFAEGAMRKAFRMKDLSAEGPSSQMVAKLFKDSNEDRMVYFKDVEMQTYSKEIAERFNLKSPPKKIDFVPAFVMELVERQGKPFCAVEYFIEGKYEKHNNNFGYKNDYDRNTPQAFSHFSYEDSGCQLIVVDIQGVGDVYTDPQIHSADGQGFGKGNLGIEGIKRFFSTHQCNPICHYLGLSSVNPKPANDESGTMPRPPSIGQSYVRPSAFPPNLQQSFSFNFPPLKDHHVLEQLNQQQQHLQQQQQQQQQQQQQQQQQQQQQQQQQQQQQQQQQQQQQQQQQNQQQNQQQNQQQQQQQQQQQQQQQNGHPPPQTPLPPTPQQKDKPKIEVFGDILRKLVS.

One can recognise an Arf-GAP domain in the interval 7–127 (DPNYGLLRSL…RWTSSLSTSD (121 aa)). Residues 25-48 (CAECNSANVPYVCIKLGVFICPTC) form a C4-type zinc finger. Disordered stretches follow at residues 123–164 (LSTS…NNNN), 219–380 (TQSQ…PQHH), 424–445 (QQQQQSPISNPFTSNNNSNSEP), 457–484 (HNHHHHQQQQHHKQQQQQQQQQQNGNNS), 503–560 (FVEE…GGVS), and 619–658 (IINNQNNQNNNNNNNTNNVMISPSPSPNPFLPTPTSTNQN). A compositionally biased stretch (polar residues) spans 237-246 (GFSPFNSPRS). 2 stretches are compositionally biased toward low complexity: residues 268 to 287 (NNSNNNNNNNNNNNNGNNGN) and 298 to 318 (NNNNNNNNNTTTTTTTTNNNN). 2 stretches are compositionally biased toward polar residues: residues 329–352 (KTFSESGEYQNTNGNQQLSGSGNS) and 359–379 (HPTQSKSPSPSGTPHSLSPQH). Positions 393–429 (TTQQQLQQQQLQLQQQLQQQLQQQQQQQQQQQQQQQS) form a coiled coil. Composition is skewed to basic residues over residues 458 to 470 (NHHHHQQQQHHKQ) and 510 to 523 (HQHPHHLQHHRHHS). The segment covering 619–636 (IINNQNNQNNNNNNNTNN) has biased composition (low complexity). Residues 689 to 781 (YIQQQQQQQQ…QQQQQQHINL (93 aa)) adopt a coiled-coil conformation. Disordered stretches follow at residues 786–863 (PLQS…TDED) and 901–979 (TSPI…PDAR). Residues 799–812 (PQHSSSQYMNQQGY) are compositionally biased toward polar residues. Residues 821-859 (QPQSPQQIQPQPLQQQIFQQVQQQQPQIPQQSPQPLQSS) are compositionally biased toward low complexity. Over residues 906–915 (QQPPQPPQPV) the composition is skewed to pro residues. Positions 931 to 965 (QQQNGPTVPQQQQQQQQQQQQQQQQQQQQQQQQQP) are enriched in low complexity. The Alpha-type protein kinase domain occupies 990-1194 (RFDAKLGKWV…ICHYLGLSSV (205 aa)). ATP is bound at residue 1164 to 1169 (GKGNLG). 2 disordered regions span residues 1198–1234 (PANDESGTMPRPPSIGQSYVRPSAFPPNLQQSFSFNF) and 1279–1352 (QQQQ…KLVS). A coiled-coil region spans residues 1241-1320 (HVLEQLNQQQ…QQQQQQQQNG (80 aa)). Residues 1279-1319 (QQQQQQQQQQQQQQQQNQQQNQQQNQQQQQQQQQQQQQQQN) show a composition bias toward low complexity. Residues 1321 to 1332 (HPPPQTPLPPTP) are compositionally biased toward pro residues. The span at 1334 to 1352 (QKDKPKIEVFGDILRKLVS) shows a compositional bias: basic and acidic residues.

The protein belongs to the protein kinase superfamily. Alpha-type protein kinase family. ALPK subfamily.

This Dictyostelium discoideum (Social amoeba) protein is Alpha-protein kinase 1 (ak1).